Consider the following 201-residue polypeptide: Peptidyl-tRNA hydrolase (201 aa).

Position 15 (Tyr-15) interacts with tRNA. His-20 acts as the Proton acceptor in catalysis. Residues Tyr-66, Asn-68, and Asn-114 each coordinate tRNA.

The protein belongs to the PTH family. Monomer.

The protein localises to the cytoplasm. It carries out the reaction an N-acyl-L-alpha-aminoacyl-tRNA + H2O = an N-acyl-L-amino acid + a tRNA + H(+). Functionally, hydrolyzes ribosome-free peptidyl-tRNAs (with 1 or more amino acids incorporated), which drop off the ribosome during protein synthesis, or as a result of ribosome stalling. Catalyzes the release of premature peptidyl moieties from peptidyl-tRNA molecules trapped in stalled 50S ribosomal subunits, and thus maintains levels of free tRNAs and 50S ribosomes. This Burkholderia pseudomallei (strain K96243) protein is Peptidyl-tRNA hydrolase.